The following is a 357-amino-acid chain: Peptide chain release factor 1 (357 aa).

Q233 is modified (N5-methylglutamine). The tract at residues 284–305 is disordered; it reads RSASISADRKSQVGTGDRSERI.

The protein belongs to the prokaryotic/mitochondrial release factor family. Post-translationally, methylated by PrmC. Methylation increases the termination efficiency of RF1.

Its subcellular location is the cytoplasm. In terms of biological role, peptide chain release factor 1 directs the termination of translation in response to the peptide chain termination codons UAG and UAA. This is Peptide chain release factor 1 from Clostridium novyi (strain NT).